A 335-amino-acid chain; its full sequence is Methionine aminopeptidase 1D, mitochondrial (335 aa).

Residues 1–19 (MAAPIGVPLLVRGGCQRIL) constitute a mitochondrion transit peptide. Histidine 161 contacts substrate. Aspartate 178, aspartate 189, and histidine 252 together coordinate a divalent metal cation. Substrate is bound at residue histidine 259. 2 residues coordinate a divalent metal cation: glutamate 284 and glutamate 315.

The protein belongs to the peptidase M24A family. Methionine aminopeptidase type 1 subfamily. The cofactor is Co(2+). It depends on Zn(2+) as a cofactor. Mn(2+) serves as cofactor. Fe(2+) is required as a cofactor.

It localises to the mitochondrion. It catalyses the reaction Release of N-terminal amino acids, preferentially methionine, from peptides and arylamides.. Functionally, removes the N-terminal methionine from nascent proteins. The N-terminal methionine is often cleaved when the second residue in the primary sequence is small and uncharged (Met-Ala-, Cys, Gly, Pro, Ser, Thr, or Val). Requires deformylation of the N(alpha)-formylated initiator methionine before it can be hydrolyzed. The protein is Methionine aminopeptidase 1D, mitochondrial (Metap1d) of Mus musculus (Mouse).